The primary structure comprises 700 residues: Elongation factor G (700 aa).

Positions 8-290 (ERYRNIGISA…AVVEYLPAPT (283 aa)) constitute a tr-type G domain. GTP is bound by residues 17–24 (AHIDAGKT), 88–92 (DTPGH), and 142–145 (NKMD).

Belongs to the TRAFAC class translation factor GTPase superfamily. Classic translation factor GTPase family. EF-G/EF-2 subfamily.

The protein localises to the cytoplasm. Its function is as follows. Catalyzes the GTP-dependent ribosomal translocation step during translation elongation. During this step, the ribosome changes from the pre-translocational (PRE) to the post-translocational (POST) state as the newly formed A-site-bound peptidyl-tRNA and P-site-bound deacylated tRNA move to the P and E sites, respectively. Catalyzes the coordinated movement of the two tRNA molecules, the mRNA and conformational changes in the ribosome. In Haemophilus influenzae (strain 86-028NP), this protein is Elongation factor G.